We begin with the raw amino-acid sequence, 202 residues long: Dephospho-CoA kinase (202 aa).

The 200-residue stretch at 3-202 (TIGITGGIGS…TKRPNPPDRL (200 aa)) folds into the DPCK domain. 11–16 (GSGKSV) contacts ATP. The interval 138-161 (RAMARDGSSAETMRQRMLSQEREQ) is disordered.

This sequence belongs to the CoaE family.

The protein resides in the cytoplasm. It carries out the reaction 3'-dephospho-CoA + ATP = ADP + CoA + H(+). It participates in cofactor biosynthesis; coenzyme A biosynthesis; CoA from (R)-pantothenate: step 5/5. In terms of biological role, catalyzes the phosphorylation of the 3'-hydroxyl group of dephosphocoenzyme A to form coenzyme A. The chain is Dephospho-CoA kinase from Porphyromonas gingivalis (strain ATCC BAA-308 / W83).